A 339-amino-acid polypeptide reads, in one-letter code: 2-halobenzoate 1,2-dioxygenase electron transfer component (339 aa).

The region spanning H3–S96 is the 2Fe-2S ferredoxin-type domain. The [2Fe-2S] cluster site is built by C40, C45, C48, and C80. The tract at residues A98–T336 is ferredoxin-reductase. The region spanning K103–R203 is the FAD-binding FR-type domain.

The protein belongs to the bacterial ring-hydroxylating dioxygenase ferredoxin reductase family. As to quaternary structure, monomer. It is part of 2-halobenzoate dioxygenase two component enzyme system. The other component is a dioxygenase component consisting of 3 large (CbdA) subunits and 3 small (CbdB) subunits. Requires FAD as cofactor. [2Fe-2S] cluster is required as a cofactor.

The catalysed reaction is 2 reduced [2Fe-2S]-[ferredoxin] + NAD(+) + H(+) = 2 oxidized [2Fe-2S]-[ferredoxin] + NADH. It participates in xenobiotic degradation; benzoate degradation via CoA ligation. Functionally, electron transfer component of 2-halobenzoate 1,2-dioxygenase system. This Burkholderia cepacia (Pseudomonas cepacia) protein is 2-halobenzoate 1,2-dioxygenase electron transfer component (cbdC).